Reading from the N-terminus, the 553-residue chain is Zinc finger matrin-type protein 1 (553 aa).

The disordered stretch occupies residues 16–36 (TPSSPAATCSGPMAGGDTSSN). 4 consecutive Matrin-type zinc fingers follow at residues 61-91 (TFCK…KVRL), 125-155 (KFCG…KMRQ), 223-253 (KYCK…NQAR), and 275-305 (YVCP…KESM). Disordered regions lie at residues 341-402 (QFRQ…DQRV) and 428-553 (HISR…ILGF). Over residues 350–362 (DSCDYEEEEEQEP) the composition is skewed to acidic residues. The segment covering 431-453 (RSPTSQDSSDNSSGSSSDESSGS) has biased composition (low complexity). The segment covering 456–476 (KDKRRKRKHHRESRLRGSGRI) has biased composition (basic residues). Over residues 477 to 513 (RRGDENSEKRKRKGEDADSGKEDNKHDRGKTSGGDKD) the composition is skewed to basic and acidic residues.

The protein localises to the nucleus. This chain is Zinc finger matrin-type protein 1 (zmat1), found in Xenopus tropicalis (Western clawed frog).